A 151-amino-acid polypeptide reads, in one-letter code: UPF0178 protein RD1_0321 (151 aa).

This sequence belongs to the UPF0178 family.

This is UPF0178 protein RD1_0321 from Roseobacter denitrificans (strain ATCC 33942 / OCh 114) (Erythrobacter sp. (strain OCh 114)).